Reading from the N-terminus, the 364-residue chain is Phospho-N-acetylmuramoyl-pentapeptide-transferase (364 aa).

10 helical membrane passes run alanine 3–isoleucine 23, threonine 51–isoleucine 71, alanine 80–isoleucine 100, methionine 116–glutamate 136, isoleucine 154–alanine 174, leucine 185–isoleucine 205, proline 229–tryptophan 249, isoleucine 256–leucine 276, leucine 281–valine 301, and phenylalanine 341–valine 361.

Belongs to the glycosyltransferase 4 family. MraY subfamily. It depends on Mg(2+) as a cofactor.

The protein resides in the cell membrane. It catalyses the reaction UDP-N-acetyl-alpha-D-muramoyl-L-alanyl-gamma-D-glutamyl-meso-2,6-diaminopimeloyl-D-alanyl-D-alanine + di-trans,octa-cis-undecaprenyl phosphate = di-trans,octa-cis-undecaprenyl diphospho-N-acetyl-alpha-D-muramoyl-L-alanyl-D-glutamyl-meso-2,6-diaminopimeloyl-D-alanyl-D-alanine + UMP. The protein operates within cell wall biogenesis; peptidoglycan biosynthesis. Its function is as follows. Catalyzes the initial step of the lipid cycle reactions in the biosynthesis of the cell wall peptidoglycan: transfers peptidoglycan precursor phospho-MurNAc-pentapeptide from UDP-MurNAc-pentapeptide onto the lipid carrier undecaprenyl phosphate, yielding undecaprenyl-pyrophosphoryl-MurNAc-pentapeptide, known as lipid I. The protein is Phospho-N-acetylmuramoyl-pentapeptide-transferase of Nocardioides sp. (strain ATCC BAA-499 / JS614).